Reading from the N-terminus, the 681-residue chain is 2-(S-pantetheinyl)-carbapenam-3-carboxylate methyltransferase (681 aa).

The 144-residue stretch at 1 to 144 (MTVPAARSGR…IERLADHPDY (144 aa)) folds into the B12-binding domain. Cob(II)alamin contacts are provided by Asn18, Ser72, Tyr74, Val75, His103, Gly126, and Glu127. The Radical SAM core domain occupies 192-417 (RDLRFYALWE…RLYVEEPGTP (226 aa)). Residues Cys206 and Cys210 each contribute to the [4Fe-4S] cluster site. Phe212 is a binding site for 5'-deoxyadenosine. Cys213 is a [4Fe-4S] cluster binding site. Asp214 and Cys249 together coordinate cob(II)alamin. 3 residues coordinate 5'-deoxyadenosine: Gln312, Glu349, and Gly384.

Belongs to the methyltransferase superfamily. [4Fe-4S] cluster is required as a cofactor. The cofactor is cob(II)alamin.

It carries out the reaction (2R,3R,5S)-2-(S-pantetheinyl)-carbapenam-3-carboxylate + AH2 + 2 S-adenosyl-L-methionine = (2R,3R,5S,6R)-6-(methyl)-2-(S-pantetheinyl)-carbapenam-3-carboxylate + 5'-deoxyadenosine + L-methionine + A + S-adenosyl-L-homocysteine + 2 H(+). It catalyses the reaction (2R,3R,5S,6R)-6-(methyl)-2-(S-pantetheinyl)-carbapenam-3-carboxylate + AH2 + 2 S-adenosyl-L-methionine = (2R,3R,5S,6R)-6-(ethyl)-2-(S-pantetheinyl)-carbapenam-3-carboxylate + 5'-deoxyadenosine + L-methionine + A + S-adenosyl-L-homocysteine + 2 H(+). The protein operates within antibiotic biosynthesis. Functionally, methyltransferase involved in the biosynthesis of the beta-lactam carbapenem antibiotic thienamycin. Catalyzes two consecutive S-adenosyl-L-methionine-dependent methylations to build out the C6-ethyl side chain in a stereocontrolled manner. In vitro can use methyl viologen and NADPH as the iron-sulfur cluster reductants. The protein is 2-(S-pantetheinyl)-carbapenam-3-carboxylate methyltransferase of Streptantibioticus cattleyicolor (strain ATCC 35852 / DSM 46488 / JCM 4925 / NBRC 14057 / NRRL 8057) (Streptomyces cattleya).